The sequence spans 203 residues: Small ribosomal subunit protein uS4 (203 aa).

Residues 93 to 154 (RRLDNVVFRA…KSRNMDAVTD (62 aa)) form the S4 RNA-binding domain.

It belongs to the universal ribosomal protein uS4 family. Part of the 30S ribosomal subunit. Contacts protein S5. The interaction surface between S4 and S5 is involved in control of translational fidelity.

In terms of biological role, one of the primary rRNA binding proteins, it binds directly to 16S rRNA where it nucleates assembly of the body of the 30S subunit. With S5 and S12 plays an important role in translational accuracy. This Chlorobium luteolum (strain DSM 273 / BCRC 81028 / 2530) (Pelodictyon luteolum) protein is Small ribosomal subunit protein uS4.